The following is a 444-amino-acid chain: Pineal opsin (444 aa).

The tract at residues 1 to 20 (MDALQESPPSHHSLPSALPS) is disordered. The Extracellular portion of the chain corresponds to 1 to 46 (MDALQESPPSHHSLPSALPSATGGNGTVATMHNPFERPLEGIAPWN). Over residues 7-20 (SPPSHHSLPSALPS) the composition is skewed to low complexity. A glycan (N-linked (GlcNAc...) asparagine) is linked at N25. Residues 47–71 (FTMLAALMGTITALSLGENFAVIVV) traverse the membrane as a helical segment. Over 72–83 (TARFRQLRQPLN) the chain is Cytoplasmic. A helical membrane pass occupies residues 84–108 (YVLVNLAAADLLVSAIGGSVSFFTN). At 109–123 (IKGYFFLGVHACVLE) the chain is on the extracellular side. A disulfide bond links C120 and C197. Residues 124–143 (GFAVTYFGVVALWSLALLAF) form a helical membrane-spanning segment. Residues 144 to 162 (ERYFVICRPLGNFRLQSKH) are Cytoplasmic-facing. Residues 163-186 (AVLGLAVVWVFSLACTLPPVLGWS) traverse the membrane as a helical segment. Over 187–210 (SYRPSMIGTTCEPNWYSGELHDHT) the chain is Extracellular. A helical membrane pass occupies residues 211 to 238 (FILMFFSTCFIFPLAVIFFSYGKLIQKL). The Cytoplasmic portion of the chain corresponds to 239–260 (KKASETQRGLESTRRAEQQVTR). Residues 261–284 (MVVVMILAFLVCWMPYATFSIVVT) traverse the membrane as a helical segment. At 285-292 (ACPTIHLD) the chain is on the extracellular side. Residues 293–317 (PLLAAVPAFFSKTATVYNPVIYIFM) form a helical membrane-spanning segment. K304 carries the post-translational modification N6-(retinylidene)lysine. Residues 318–444 (NKQFRDCFVQ…SESVSKICPV (127 aa)) are Cytoplasmic-facing. C331 is lipidated: S-palmitoyl cysteine. Disordered regions lie at residues 341-360 (QTAGAQDTEHTASVNTQSPG) and 388-420 (EPTMSAAGSMGAPPNKSTAPCQQQGQQQQQQGT). A compositionally biased stretch (low complexity) spans 409 to 419 (QQQGQQQQQQG).

It belongs to the G-protein coupled receptor 1 family. Opsin subfamily. In terms of processing, phosphorylated on some or all of the serine and threonine residues present in the C-terminal region. Pineal gland.

It is found in the membrane. The chain is Pineal opsin from Petromyzon marinus (Sea lamprey).